Here is a 247-residue protein sequence, read N- to C-terminus: Probable transcriptional regulatory protein BT_0627 (247 aa).

This sequence belongs to the TACO1 family.

It is found in the cytoplasm. The sequence is that of Probable transcriptional regulatory protein BT_0627 from Bacteroides thetaiotaomicron (strain ATCC 29148 / DSM 2079 / JCM 5827 / CCUG 10774 / NCTC 10582 / VPI-5482 / E50).